The chain runs to 109 residues: Putative double-stranded DNA mimic protein Ent638_2296 (109 aa).

The protein belongs to the putative dsDNA mimic protein family.

Its function is as follows. May act as a double-stranded DNA (dsDNA) mimic. Probably regulates the activity of a dsDNA-binding protein. The protein is Putative double-stranded DNA mimic protein Ent638_2296 of Enterobacter sp. (strain 638).